Reading from the N-terminus, the 376-residue chain is Flagellin B (376 aa).

The stretch at 103–130 (SNSSSERQAIQEEVSALNDELNRIAETT) forms a coiled coil.

It belongs to the bacterial flagellin family. Heteromer of multiple flagellin subunits including FlaA, FlaB, FlaC, FlaD and possibly FlaE.

It is found in the secreted. The protein resides in the bacterial flagellum. Functionally, flagellin is the subunit protein which polymerizes to form the filaments of bacterial flagella. FlaB is not essential for flagellar synthesis and motility. In Vibrio anguillarum (Listonella anguillarum), this protein is Flagellin B (flaB).